The primary structure comprises 231 residues: PX domain-containing protein 1 (231 aa).

In terms of domain architecture, PX spans 1-134 (MASAVFEGTS…TFFERSPLDQ (134 aa)).

This chain is PX domain-containing protein 1 (PXDC1), found in Bos taurus (Bovine).